We begin with the raw amino-acid sequence, 270 residues long: Phospholysine phosphohistidine inorganic pyrophosphate phosphatase (270 aa).

Mg(2+) contacts are provided by aspartate 17 and serine 19. Substrate is bound by residues 17–19 (DIS), 54–55 (TN), and lysine 189. Position 214 (aspartate 214) interacts with Mg(2+).

The protein belongs to the HAD-like hydrolase superfamily. Homodimer. The cofactor is Mg(2+). In terms of tissue distribution, expressed in brain, and at lower levels in liver and kidney. Detected in thyroid (at protein level). Expressed in liver, kidney and moderately in brain.

It is found in the cytoplasm. Its subcellular location is the nucleus. It catalyses the reaction diphosphate + H2O = 2 phosphate + H(+). Phosphatase that hydrolyzes imidodiphosphate, 3-phosphohistidine and 6-phospholysine. Has broad substrate specificity and can also hydrolyze inorganic diphosphate, but with lower efficiency. This Homo sapiens (Human) protein is Phospholysine phosphohistidine inorganic pyrophosphate phosphatase (LHPP).